The sequence spans 470 residues: ATP synthase subunit beta (470 aa).

Residue 156-163 participates in ATP binding; the sequence is GGAGVGKT.

The protein belongs to the ATPase alpha/beta chains family. In terms of assembly, F-type ATPases have 2 components, CF(1) - the catalytic core - and CF(0) - the membrane proton channel. CF(1) has five subunits: alpha(3), beta(3), gamma(1), delta(1), epsilon(1). CF(0) has three main subunits: a(1), b(2) and c(9-12). The alpha and beta chains form an alternating ring which encloses part of the gamma chain. CF(1) is attached to CF(0) by a central stalk formed by the gamma and epsilon chains, while a peripheral stalk is formed by the delta and b chains.

The protein resides in the cell inner membrane. It catalyses the reaction ATP + H2O + 4 H(+)(in) = ADP + phosphate + 5 H(+)(out). Its function is as follows. Produces ATP from ADP in the presence of a proton gradient across the membrane. The catalytic sites are hosted primarily by the beta subunits. The polypeptide is ATP synthase subunit beta (Thermosipho africanus (strain TCF52B)).